The chain runs to 221 residues: Thymidylate kinase (221 aa).

12–19 provides a ligand contact to ATP; it reads GIDGAGKS.

The protein belongs to the thymidylate kinase family.

The catalysed reaction is dTMP + ATP = dTDP + ADP. Functionally, phosphorylation of dTMP to form dTDP in both de novo and salvage pathways of dTTP synthesis. The polypeptide is Thymidylate kinase (Paracidovorax citrulli (strain AAC00-1) (Acidovorax citrulli)).